The following is a 383-amino-acid chain: Soluble hydrogenase 42 kDa subunit (383 aa).

N6-(pyridoxal phosphate)lysine is present on lysine 194.

Belongs to the class-V pyridoxal-phosphate-dependent aminotransferase family. In terms of assembly, heterodimer of a large and a small subunit. Pyridoxal 5'-phosphate serves as cofactor.

Its subcellular location is the cytoplasm. In terms of biological role, soluble hydrogenase catalyzes both production and consumption of hydrogen from suitable artificial electron donors or acceptors. This subunit catalyzes the tritium-exchange activity. In Anabaena cylindrica, this protein is Soluble hydrogenase 42 kDa subunit.